The sequence spans 357 residues: Fructose-1,6-bisphosphatase class 1 3 (357 aa).

Residues Glu-94, Asp-116, Leu-118, and Asp-119 each contribute to the Mg(2+) site. Residues 119 to 122 (DGSS) and Asn-211 each bind substrate. Position 283 (Glu-283) interacts with Mg(2+).

Belongs to the FBPase class 1 family. In terms of assembly, homotetramer. Requires Mg(2+) as cofactor.

The protein resides in the cytoplasm. The enzyme catalyses beta-D-fructose 1,6-bisphosphate + H2O = beta-D-fructose 6-phosphate + phosphate. The protein operates within carbohydrate biosynthesis; Calvin cycle. This is Fructose-1,6-bisphosphatase class 1 3 from Methylibium petroleiphilum (strain ATCC BAA-1232 / LMG 22953 / PM1).